Here is a 404-residue protein sequence, read N- to C-terminus: CCA-adding enzyme (404 aa).

Residues G27 and R30 each coordinate ATP. Residues G27 and R30 each coordinate CTP. Mg(2+) contacts are provided by D40 and D42. Residues R111, D154, R157, R160, and R163 each contribute to the ATP site. The CTP site is built by R111, D154, R157, R160, and R163.

This sequence belongs to the tRNA nucleotidyltransferase/poly(A) polymerase family. Bacterial CCA-adding enzyme type 3 subfamily. Homodimer. Mg(2+) serves as cofactor.

It carries out the reaction a tRNA precursor + 2 CTP + ATP = a tRNA with a 3' CCA end + 3 diphosphate. The catalysed reaction is a tRNA with a 3' CCA end + 2 CTP + ATP = a tRNA with a 3' CCACCA end + 3 diphosphate. Functionally, catalyzes the addition and repair of the essential 3'-terminal CCA sequence in tRNAs without using a nucleic acid template. Adds these three nucleotides in the order of C, C, and A to the tRNA nucleotide-73, using CTP and ATP as substrates and producing inorganic pyrophosphate. tRNA 3'-terminal CCA addition is required both for tRNA processing and repair. Also involved in tRNA surveillance by mediating tandem CCA addition to generate a CCACCA at the 3' terminus of unstable tRNAs. While stable tRNAs receive only 3'-terminal CCA, unstable tRNAs are marked with CCACCA and rapidly degraded. In Geobacillus kaustophilus (strain HTA426), this protein is CCA-adding enzyme.